Here is a 187-residue protein sequence, read N- to C-terminus: ATP synthase subunit b, chloroplastic (187 aa).

The chain crosses the membrane as a helical span at residues 34–56; sequence LINLAAVIGLLFYSGRSFLTNLL.

The protein belongs to the ATPase B chain family. F-type ATPases have 2 components, F(1) - the catalytic core - and F(0) - the membrane proton channel. F(1) has five subunits: alpha(3), beta(3), gamma(1), delta(1), epsilon(1). F(0) has four main subunits: a(1), b(1), b'(1) and c(10-14). The alpha and beta chains form an alternating ring which encloses part of the gamma chain. F(1) is attached to F(0) by a central stalk formed by the gamma and epsilon chains, while a peripheral stalk is formed by the delta, b and b' chains.

The protein localises to the plastid. Its subcellular location is the chloroplast thylakoid membrane. Its function is as follows. F(1)F(0) ATP synthase produces ATP from ADP in the presence of a proton or sodium gradient. F-type ATPases consist of two structural domains, F(1) containing the extramembraneous catalytic core and F(0) containing the membrane proton channel, linked together by a central stalk and a peripheral stalk. During catalysis, ATP synthesis in the catalytic domain of F(1) is coupled via a rotary mechanism of the central stalk subunits to proton translocation. Component of the F(0) channel, it forms part of the peripheral stalk, linking F(1) to F(0). The polypeptide is ATP synthase subunit b, chloroplastic (Chlorokybus atmophyticus (Soil alga)).